Here is a 623-residue protein sequence, read N- to C-terminus: Chaperone protein HtpG (623 aa).

The interval 1 to 341 is a; substrate-binding; sequence MEKREFKAES…SQDLSLNISR (341 aa). The tract at residues 342–549 is b; sequence EMLQHDRQLS…EGEVSIEMEK (208 aa). The segment at 550-623 is c; it reads ILSAMPNNQG…FTNDICKLMK (74 aa).

This sequence belongs to the heat shock protein 90 family. Homodimer.

The protein localises to the cytoplasm. Its function is as follows. Molecular chaperone. Has ATPase activity. The protein is Chaperone protein HtpG of Clostridium perfringens (strain ATCC 13124 / DSM 756 / JCM 1290 / NCIMB 6125 / NCTC 8237 / Type A).